The primary structure comprises 203 residues: Holliday junction branch migration complex subunit RuvA (203 aa).

The domain I stretch occupies residues 1–64 (MIGRLRGIIL…EDAQLLYGFN (64 aa)). The interval 65–142 (NKQERTLFKE…KGLHGDLFTP (78 aa)) is domain II. Residues 143-154 (AADLVLTSPAGP) form a flexible linker region. Positions 155 to 203 (TADDAEQEAVAALVALGYKPQEASRMVSKIARPDANSETLIREALRAAL) are domain III.

This sequence belongs to the RuvA family. As to quaternary structure, homotetramer. Forms an RuvA(8)-RuvB(12)-Holliday junction (HJ) complex. HJ DNA is sandwiched between 2 RuvA tetramers; dsDNA enters through RuvA and exits via RuvB. An RuvB hexamer assembles on each DNA strand where it exits the tetramer. Each RuvB hexamer is contacted by two RuvA subunits (via domain III) on 2 adjacent RuvB subunits; this complex drives branch migration. In the full resolvosome a probable DNA-RuvA(4)-RuvB(12)-RuvC(2) complex forms which resolves the HJ.

It localises to the cytoplasm. The RuvA-RuvB-RuvC complex processes Holliday junction (HJ) DNA during genetic recombination and DNA repair, while the RuvA-RuvB complex plays an important role in the rescue of blocked DNA replication forks via replication fork reversal (RFR). RuvA specifically binds to HJ cruciform DNA, conferring on it an open structure. The RuvB hexamer acts as an ATP-dependent pump, pulling dsDNA into and through the RuvAB complex. HJ branch migration allows RuvC to scan DNA until it finds its consensus sequence, where it cleaves and resolves the cruciform DNA. The chain is Holliday junction branch migration complex subunit RuvA from Klebsiella pneumoniae (strain 342).